Reading from the N-terminus, the 337-residue chain is Low-density lipoprotein receptor class A domain-containing protein 3 (337 aa).

Positions 1–13 (MWLLYLILGSVES) are cleaved as a signal peptide. Topologically, residues 14–169 (QLLPGNNHTT…NQLLYYPSIT (156 aa)) are extracellular. N20 carries N-linked (GlcNAc...) asparagine glycosylation. LDL-receptor class A domains lie at 24 to 61 (ECNI…KECP), 66 to 103 (RCGP…ENCT), and 108 to 144 (LCSN…EHCH). Disulfide bonds link C25/C38, C33/C51, C45/C60, C67/C80, C74/C93, C87/C102, C109/C121, C116/C134, and C128/C143. N-linked (GlcNAc...) asparagine glycosylation occurs at N101. Residues 170–190 (YTIIGSSVIFVLVVALLALVL) traverse the membrane as a helical segment. The Cytoplasmic segment spans residues 191 to 337 (HHQRKRNLMS…DDLPSTEVDV (147 aa)). The span at 243–253 (QQPVSVESPPS) shows a compositional bias: polar residues. The disordered stretch occupies residues 243–337 (QQPVSVESPP…DDLPSTEVDV (95 aa)). The span at 291–303 (RSRTGSSASAGST) shows a compositional bias: low complexity.

The protein belongs to the LDLR family.

It is found in the cell membrane. This is Low-density lipoprotein receptor class A domain-containing protein 3 from Xenopus tropicalis (Western clawed frog).